The chain runs to 456 residues: F-box/FBD/LRR-repeat protein At3g52680 (456 aa).

Positions 20-73 (KDRISELPDGLLLKILSSLPTNIVVATSVLSKQWRSLWKLVPNLEFDSDDYESE) constitute an F-box domain. LRR repeat units follow at residues 74-100 (HYTF…RLKF), 102-127 (NFNP…VLDF), 152-179 (TLKL…HLEF), 180-205 (VRYK…RLYR), 225-252 (TIHD…LIEE), 270-295 (IAEV…LLNL), and 318-344 (TREA…KLTD). The FBD domain occupies 358–409 (KWNEPKDVPECLLSQLETFVWRRFDWGREEEKEIATYILKNGRRLKKATFST).

The chain is F-box/FBD/LRR-repeat protein At3g52680 from Arabidopsis thaliana (Mouse-ear cress).